Consider the following 136-residue polypeptide: Keratin-associated protein 4-2 (136 aa).

20 tandem repeats follow at residues 5 to 9, 20 to 24, 25 to 29, 30 to 34, 35 to 39, 40 to 44, 45 to 49, 50 to 54, 55 to 59, 60 to 64, 65 to 69, 70 to 74, 75 to 79, 80 to 84, 90 to 94, 95 to 99, 100 to 104, 110 to 114, 120 to 124, and 125 to 129. The 20 X 5 AA repeats OF C-C-[GRQVS]-[SPT]-[VSTQ] stretch occupies residues 5–129; it reads CCGSVCSDQG…CCVSTCCRPT (125 aa).

This sequence belongs to the KRTAP type 4 family. As to quaternary structure, interacts with hair keratins.

Its function is as follows. In the hair cortex, hair keratin intermediate filaments are embedded in an interfilamentous matrix, consisting of hair keratin-associated proteins (KRTAP), which are essential for the formation of a rigid and resistant hair shaft through their extensive disulfide bond cross-linking with abundant cysteine residues of hair keratins. The matrix proteins include the high-sulfur and high-glycine-tyrosine keratins. The chain is Keratin-associated protein 4-2 (KRTAP4-2) from Homo sapiens (Human).